The primary structure comprises 279 residues: Formamidopyrimidine-DNA glycosylase (279 aa).

Pro2 (schiff-base intermediate with DNA) is an active-site residue. Glu3 acts as the Proton donor in catalysis. Catalysis depends on Lys57, which acts as the Proton donor; for beta-elimination activity. His90, Arg109, and Arg151 together coordinate DNA. The FPG-type zinc finger occupies 236–270 (FVYGRTGQPCRVCQTPIAVLRLGQRSTFYCPACQQ). Arg260 functions as the Proton donor; for delta-elimination activity in the catalytic mechanism.

The protein belongs to the FPG family. In terms of assembly, monomer. Zn(2+) serves as cofactor.

The enzyme catalyses Hydrolysis of DNA containing ring-opened 7-methylguanine residues, releasing 2,6-diamino-4-hydroxy-5-(N-methyl)formamidopyrimidine.. It catalyses the reaction 2'-deoxyribonucleotide-(2'-deoxyribose 5'-phosphate)-2'-deoxyribonucleotide-DNA = a 3'-end 2'-deoxyribonucleotide-(2,3-dehydro-2,3-deoxyribose 5'-phosphate)-DNA + a 5'-end 5'-phospho-2'-deoxyribonucleoside-DNA + H(+). In terms of biological role, involved in base excision repair of DNA damaged by oxidation or by mutagenic agents. Acts as a DNA glycosylase that recognizes and removes damaged bases. Has a preference for oxidized purines, such as 7,8-dihydro-8-oxoguanine (8-oxoG). Has AP (apurinic/apyrimidinic) lyase activity and introduces nicks in the DNA strand. Cleaves the DNA backbone by beta-delta elimination to generate a single-strand break at the site of the removed base with both 3'- and 5'-phosphates. The sequence is that of Formamidopyrimidine-DNA glycosylase from Methylobacillus flagellatus (strain ATCC 51484 / DSM 6875 / VKM B-1610 / KT).